The primary structure comprises 1713 residues: uncharacterized protein (1713 aa).

Over residues 1 to 12 (MNENEFSTNSLI) the composition is skewed to polar residues. 7 disordered regions span residues 1 to 35 (MNEN…INFG), 79 to 200 (QQLN…KLSN), 226 to 290 (GNNN…QPLS), 309 to 557 (QYLS…PMSH), 713 to 734 (SNDQ…KKDR), 808 to 952 (SPPM…SITT), and 1143 to 1190 (HHHH…SISR). Composition is skewed to low complexity over residues 13–35 (NQQG…INFG), 79–109 (QQLN…NNNN), 126–170 (NNSG…NSGN), 177–200 (NMSD…KLSN), and 226–264 (GNNN…GGNN). Residues 265 to 276 (SHHHHNHSHHNS) are compositionally biased toward basic residues. Low complexity-rich tracts occupy residues 317–470 (NNIN…SPAS) and 478–489 (SNNFGGNHNNYN). Residues 490-504 (HAHHSHHNNHAHHNT) show a composition bias toward basic residues. Over residues 505–553 (HNYNNNNNNNNNNNNNNNNNNNNSNNSNNNSNTNNNGNNGNNSNNNNNH) the composition is skewed to low complexity. A DNA-binding region (NDT80) is located at residues 544-825 (GNNSNNNNNH…QNPGRFLNHD (282 aa)). The span at 822–832 (LNHDKSLKKDP) shows a compositional bias: basic and acidic residues. Over residues 838–874 (GGKGGGGSGSGGMGGGMGGGMGNNGSSGSSSNGGYGN) the composition is skewed to gly residues. Composition is skewed to low complexity over residues 898-946 (SPTT…PTLT) and 1148-1189 (QQQQ…SSIS). The region spanning 1240 to 1355 (SDQRIKSNIR…RSLKKEKDHI (116 aa)) is the Peptidase S74 domain. Helical transmembrane passes span 1416–1436 (TMFV…FYLF), 1447–1467 (LMNF…TFYV), and 1473–1493 (LIIA…VGFF). A compositionally biased stretch (low complexity) spans 1596 to 1605 (NSNNNINNNN). 2 disordered regions span residues 1596–1634 (NSNN…DFHE) and 1646–1665 (IKGK…SSSN). Basic and acidic residues predominate over residues 1617–1634 (FIDDFKKSSSNNHKDFHE).

The protein localises to the membrane. This is an uncharacterized protein from Dictyostelium discoideum (Social amoeba).